A 450-amino-acid chain; its full sequence is Phosphoglucosamine mutase (450 aa).

S102 acts as the Phosphoserine intermediate in catalysis. Positions 102, 243, 245, and 247 each coordinate Mg(2+). Residue S102 is modified to Phosphoserine.

It belongs to the phosphohexose mutase family. It depends on Mg(2+) as a cofactor. In terms of processing, activated by phosphorylation.

The enzyme catalyses alpha-D-glucosamine 1-phosphate = D-glucosamine 6-phosphate. Its function is as follows. Catalyzes the conversion of glucosamine-6-phosphate to glucosamine-1-phosphate. The sequence is that of Phosphoglucosamine mutase from Allorhizobium ampelinum (strain ATCC BAA-846 / DSM 112012 / S4) (Agrobacterium vitis (strain S4)).